The chain runs to 973 residues: Vacuolar membrane protease (973 aa).

The Cytoplasmic portion of the chain corresponds to 1-15 (MARQYSRTNPLGFTP). Residues 16 to 36 (WPVTIITALVYLALVIPLLVV) form a helical membrane-spanning segment. The Vacuolar segment spans residues 37-383 (QHVVPSAPGS…STLAVFELHT (347 aa)). Asparagine 52 and asparagine 115 each carry an N-linked (GlcNAc...) asparagine glycan. Zn(2+) contacts are provided by histidine 167 and aspartate 179. The active-site Proton acceptor is glutamate 213. Residues glutamate 214, glutamate 239, and histidine 312 each coordinate Zn(2+). A helical transmembrane segment spans residues 384–404 (LFALSVTLLIVAPLVLLATSI). The Cytoplasmic portion of the chain corresponds to 405–438 (ALVRADRMYLFRSTARVPGSDDFDEGVSLQGVRG). The chain crosses the membrane as a helical span at residues 439 to 459 (FFRFPFLLVIPTGVAVGLAYL). The Vacuolar portion of the chain corresponds to 460–469 (VTKINPYIIH). A helical membrane pass occupies residues 470 to 490 (SSEYAVWSMMISAWVFLAWFV). At 491–504 (SRVADFARPSAFHR) the chain is on the cytoplasmic side. Residues 505–525 (VYVLTWMFVAEWVLLVIATVY) form a helical membrane-spanning segment. Residues 526–529 (ENRY) lie on the Vacuolar side of the membrane. A helical membrane pass occupies residues 530–550 (GLAGGYFVFFALSGTFLATWI). Over 551-674 (SYLELFALPR…GLPKWTWVLQ (124 aa)) the chain is Cytoplasmic. Residues 572–623 (SRYASNHGSRLGTSSGEHGMDDAEDEEDDDGDDEDEARNVEEEPTESTSLLR) are disordered. The segment covering 574–587 (YASNHGSRLGTSSG) has biased composition (polar residues). A compositionally biased stretch (acidic residues) spans 593–607 (DAEDEEDDDGDDEDE). The helical transmembrane segment at 675–695 (FLLSAPIVLILVGPLALLLTA) threads the bilayer. At 696–708 (ALRQTAQDGSSPL) the chain is on the vacuolar side. A helical transmembrane segment spans residues 709–729 (FVYIAIAVLTTLLVTPLLPFI). The Cytoplasmic segment spans residues 730 to 735 (HRYTHH). A helical transmembrane segment spans residues 736–756 (IPLFLLLVFTGTLIYNLVAFP). Topologically, residues 757-973 (FSPSNRLKLF…LVEGSRRFEV (217 aa)) are vacuolar. N-linked (GlcNAc...) asparagine glycans are attached at residues asparagine 803 and asparagine 839.

The protein belongs to the peptidase M28 family. Requires Zn(2+) as cofactor.

Its subcellular location is the vacuole membrane. Its function is as follows. May be involved in vacuolar sorting and osmoregulation. In Aspergillus clavatus (strain ATCC 1007 / CBS 513.65 / DSM 816 / NCTC 3887 / NRRL 1 / QM 1276 / 107), this protein is Vacuolar membrane protease.